The chain runs to 256 residues: Sugar fermentation stimulation protein homolog (256 aa).

Over residues 128-141 (TGSTDTSFSGTPPT) the composition is skewed to low complexity. The disordered stretch occupies residues 128 to 149 (TGSTDTSFSGTPPTNTEPANTK).

The protein belongs to the SfsA family.

This Shewanella sediminis (strain HAW-EB3) protein is Sugar fermentation stimulation protein homolog.